Reading from the N-terminus, the 375-residue chain is Negative elongation factor E (375 aa).

Residues 7–36 adopt a coiled-coil conformation; sequence GLSEEEEALQKKFNKLKKKKKALLALKKQS. A disordered region spans residues 30-58; sequence LALKKQSSSGPASQGGVKRSLSEQPVVDT. Ser-51 is modified (phosphoserine). A Glycyl lysine isopeptide (Lys-Gly) (interchain with G-Cter in SUMO1); alternate cross-link involves residue Lys-78. Lys-78 participates in a covalent cross-link: Glycyl lysine isopeptide (Lys-Gly) (interchain with G-Cter in SUMO2); alternate. The segment at 79–262 is disordered; it reads AETKNSGFKR…SDSFPERRAP (184 aa). Lys-82 participates in a covalent cross-link: Glycyl lysine isopeptide (Lys-Gly) (interchain with G-Cter in SUMO2). The segment covering 90–101 has biased composition (basic and acidic residues); the sequence is RTLEGKLKDPEK. Residues Ser-113 and Ser-115 each carry the phosphoserine modification. A PolyADP-ribosyl glutamic acid modification is found at Glu-122. 2 positions are modified to phosphoserine: Ser-131 and Ser-139. Residue Glu-151 is modified to PolyADP-ribosyl glutamic acid. Residues 155-167 are compositionally biased toward low complexity; the sequence is APGAGDGPPRGFD. Position 172 is a polyADP-ribosyl glutamic acid (Glu-172). Ser-179, Ser-181, Ser-185, and Ser-187 each carry phosphoserine. A run of 4 repeats spans residues 184–185, 186–187, 188–189, and 190–191. Residues 184–247 are 32 X 2 AA approximate tandem repeats of R-[DSE]; that stretch reads RSRSRDRSHD…RDRDRERDRE (64 aa). The segment covering 186 to 260 has biased composition (basic and acidic residues); it reads RSRDRSHDRS…RRSDSFPERR (75 aa). Ser-191 is subject to Phosphoserine. One copy of the 5; approximate repeat lies at 192–193; it reads HD. A run of 4 repeats spans residues 194–195, 196–197, 198–199, and 200–201. A 10; approximate repeat occupies 202–203; the sequence is KE. A run of 7 repeats spans residues 204 to 205, 206 to 207, 208 to 209, 210 to 211, 212 to 213, 214 to 215, and 216 to 217. The 18; approximate repeat unit spans residues 218–219; that stretch reads KD. The 19; approximate repeat unit spans residues 220-221; sequence KD. Tandem repeats lie at residues 222-223, 224-225, 226-227, and 228-229. A 24; approximate repeat occupies 230-231; that stretch reads KE. 8 consecutive repeat copies span residues 232-233, 234-235, 236-237, 238-239, 240-241, 242-243, 244-245, and 246-247. Residues Ser-253 and Ser-255 each carry the phosphoserine modification. Residues 266-336 enclose the RRM domain; the sequence is NTLYVYGEDM…VQLKVNIARK (71 aa). A phosphothreonine mark is found at Thr-276 and Thr-278. Phosphoserine is present on residues Ser-285 and Ser-357.

Belongs to the RRM NELF-E family. As to quaternary structure, the NELF complex is composed of NELFA, NELFB, NELFCD and NELFE. Interacts with NELFB. In terms of processing, phosphorylated by the P-TEFb complex at sites next to its RNA recognition motif, promoting its release from chromatin. Sumoylated. Post-translationally, poly-ADP-ribosylated by PARP1, thereby preventing RNA-binding and relieving transcription pausing.

It is found in the nucleus. The protein localises to the chromosome. Functionally, essential component of the NELF complex, a complex that negatively regulates the elongation of transcription by RNA polymerase II. The NELF complex, which acts via an association with the DSIF complex and causes transcriptional pausing, is counteracted by the P-TEFb kinase complex. Provides the strongest RNA binding activity of the NELF complex and may initially recruit the NELF complex to RNA. The sequence is that of Negative elongation factor E (Nelfe) from Mus musculus (Mouse).